The primary structure comprises 242 residues: Transcription factor bHLH100 (242 aa).

Residues 61–113 enclose the bHLH domain; that stretch reads MKKLNHNASERERRKKINTMFSSLRSCLPPTNQTKKLSVSATVSQALKYIPEL.

Homodimer. In terms of tissue distribution, expressed constitutively in roots, leaves, and stems.

It localises to the nucleus. Functionally, plays a role in metal homeostasis. Confers tolerance to high zinc (Zn) and nickel (Ni). The polypeptide is Transcription factor bHLH100 (BHLH100) (Arabidopsis thaliana (Mouse-ear cress)).